The sequence spans 142 residues: Hemoglobin subunit alpha-B (142 aa).

The Globin domain occupies Val-2 to Arg-142. His-59 serves as a coordination point for O2. His-88 contributes to the heme b binding site.

The protein belongs to the globin family. In terms of assembly, heterotetramer of two alpha chains and two beta chains. In terms of tissue distribution, red blood cells.

Its function is as follows. Involved in oxygen transport from the lung to the various peripheral tissues. The protein is Hemoglobin subunit alpha-B (HBAB) of Otolemur crassicaudatus (Brown greater galago).